The sequence spans 140 residues: Nucleoside triphosphatase NudI (140 aa).

Residues 1-140 (MRHRTIVCPL…RVTLSLKGLL (140 aa)) form the Nudix hydrolase domain. The Nudix box motif lies at 38–58 (GVEPGERIEEALRREIREELG).

This sequence belongs to the Nudix hydrolase family. NudI subfamily. Monomer. It depends on Mg(2+) as a cofactor.

It catalyses the reaction a ribonucleoside 5'-triphosphate + H2O = a ribonucleoside 5'-phosphate + diphosphate + H(+). It carries out the reaction a 2'-deoxyribonucleoside 5'-triphosphate + H2O = a 2'-deoxyribonucleoside 5'-phosphate + diphosphate + H(+). The catalysed reaction is dUTP + H2O = dUMP + diphosphate + H(+). The enzyme catalyses dTTP + H2O = dTMP + diphosphate + H(+). It catalyses the reaction dCTP + H2O = dCMP + diphosphate + H(+). In terms of biological role, catalyzes the hydrolysis of nucleoside triphosphates, with a preference for pyrimidine deoxynucleoside triphosphates (dUTP, dTTP and dCTP). This chain is Nucleoside triphosphatase NudI, found in Klebsiella pneumoniae subsp. pneumoniae (strain ATCC 700721 / MGH 78578).